The following is a 434-amino-acid chain: Polyadenylate-binding protein RBP47C' (434 aa).

The segment at 1–50 (MADVKVQSESESSDSHPLVDYQSLPPYPPPHPPVEVEENQPKTSPTPPPP) is disordered. RRM domains are found at residues 103–185 (KTIW…WASF), 199–278 (LSIF…PATP), and 306–378 (TTIF…WGRN).

The protein belongs to the polyadenylate-binding RBP47 family. In terms of assembly, interacts with the poly(A) tail of mRNA in nucleus.

The protein localises to the nucleus. Its subcellular location is the cytoplasmic granule. Heterogeneous nuclear ribonucleoprotein (hnRNP)-protein binding the poly(A) tail of mRNA and probably involved in some steps of pre-mRNA maturation. The chain is Polyadenylate-binding protein RBP47C' (RBP47C') from Arabidopsis thaliana (Mouse-ear cress).